An 833-amino-acid polypeptide reads, in one-letter code: A disintegrin and metalloproteinase with thrombospondin motifs 4 (833 aa).

Positions 1 to 49 are cleaved as a signal peptide; the sequence is MSQMGLHPRRGLTGHWLQRFQPCLPLHTVQWRRLLLLAFLLSLAWPASP. A propeptide spanning residues 50 to 208 is cleaved from the precursor; that stretch reads LPREEEIVFP…PSPISRRTKR (159 aa). N-linked (GlcNAc...) asparagine glycosylation occurs at Asn-63. The segment at 180–204 is disordered; that stretch reads KSPASSQGPMCTVKAPSGSPSPISR. Residues 188–195 carry the Cysteine switch motif; the sequence is PMCTVKAP. Cys-190 is a binding site for Zn(2+). Residues 214-424 form the Peptidase M12B domain; sequence RFVETLVVAD…GYGHCLLDKP (211 aa). 11 disulfide bridges follow: Cys-289-Cys-341, Cys-318-Cys-323, Cys-335-Cys-419, Cys-373-Cys-403, Cys-445-Cys-468, Cys-456-Cys-478, Cys-463-Cys-497, Cys-491-Cys-502, Cys-528-Cys-565, Cys-532-Cys-570, and Cys-543-Cys-555. Residue Asn-299 is glycosylated (N-linked (GlcNAc...) asparagine). Residue His-357 participates in Zn(2+) binding. Glu-358 is a catalytic residue. 2 residues coordinate Zn(2+): His-361 and His-367. Positions 433–515 constitute a Disintegrin domain; that stretch reads TFPGKDYDAD…DQLKDFNVPQ (83 aa). The region spanning 516–571 is the TSP type-1 domain; it reads AGGWGPWGPWGDCSRTCGGGVQFSSRDCTRPVPRNGGKYCEGRRTRFRSCNTENCP. Residues 682–833 are spacer; it reads SKQSGSFKKF…LRKRPWAGRK (152 aa).

As to quaternary structure, interacts with SRPX2. Zn(2+) is required as a cofactor. The precursor is cleaved by a furin endopeptidase. In terms of processing, glycosylated. Can be O-fucosylated by POFUT2 on a serine or a threonine residue found within the consensus sequence C1-X(2)-(S/T)-C2-G of the TSP type-1 repeat domains where C1 and C2 are the first and second cysteine residue of the repeat, respectively. Fucosylated repeats can then be further glycosylated by the addition of a beta-1,3-glucose residue by the glucosyltransferase, B3GALTL. Fucosylation mediates the efficient secretion of ADAMTS family members. Can also be C-glycosylated with one or two mannose molecules on tryptophan residues within the consensus sequence W-X-X-W of the TPRs, and N-glycosylated. These other glycosylations can also facilitate secretion.

The protein resides in the secreted. The protein localises to the extracellular space. It localises to the extracellular matrix. The enzyme catalyses Glutamyl endopeptidase. Bonds cleaved include 370-Thr-Glu-Gly-Glu-|-Ala-Arg-Gly-Ser-377 in the interglobular domain of mammalian aggrecan.. Its function is as follows. Cleaves aggrecan, a cartilage proteoglycan, at the '392-Glu-|-Ala-393' site and may be involved in its turnover. Also cleaves COMP. May play an important role in the destruction of aggrecan in arthritic diseases. The protein is A disintegrin and metalloproteinase with thrombospondin motifs 4 (Adamts4) of Mus musculus (Mouse).